The sequence spans 588 residues: Mitochondrial tRNA methylthiotransferase CDK5RAP1 (588 aa).

A mitochondrion-targeting transit peptide spans 1 to 30 (MHPLRCVLQVQRLSAPFTSMCWVLLRTCRA). Disordered regions lie at residues 33–53 (SVSS…QKDF) and 70–91 (ASVP…YLSG). The region spanning 99 to 219 (RKVYLETYGC…LPRLLAVVES (121 aa)) is the MTTase N-terminal domain. Residues Cys108, Cys144, Cys182, Cys257, Cys261, and Cys264 each contribute to the [4Fe-4S] cluster site. The region spanning 243 to 498 (SPSATSAFVS…TVFREEASKA (256 aa)) is the Radical SAM core domain. The 76-residue stretch at 500-575 (KTSVGCSQLV…SQTLKGHILC (76 aa)) folds into the TRAM domain.

It belongs to the methylthiotransferase family. MiaB subfamily. As to quaternary structure, interacts with CDK5R1 (p35 form). CDK5RAP1, CDK5RAP2 and CDK5RAP3 show competitive binding to CDK5R1. Probably forms a complex with CDK5R1 and CDK5. The cofactor is [4Fe-4S] cluster. As to expression, expressed in brain, liver, skeletal muscle and heart.

The protein resides in the mitochondrion. The catalysed reaction is N(6)-dimethylallyladenosine(37) in tRNA + (sulfur carrier)-SH + AH2 + 2 S-adenosyl-L-methionine = 2-methylsulfanyl-N(6)-dimethylallyladenosine(37) in tRNA + (sulfur carrier)-H + 5'-deoxyadenosine + L-methionine + A + S-adenosyl-L-homocysteine + 2 H(+). In terms of biological role, methylthiotransferase that catalyzes the conversion of N6-(dimethylallyl)adenosine (i(6)A) to 2-methylthio-N6-(dimethylallyl)adenosine (ms(2)i(6)A) at position 37 (adjacent to the 3'-end of the anticodon) of four mitochondrial DNA-encoded tRNAs (Ser(UCN), Phe, Tyr and Trp). Essential for efficient and highly accurate protein translation by the ribosome. Specifically inhibits CDK5 activation by CDK5R1. Essential for efficient mitochondrial protein synthesis and respiratory chain. The polypeptide is Mitochondrial tRNA methylthiotransferase CDK5RAP1 (Mus musculus (Mouse)).